Here is a 459-residue protein sequence, read N- to C-terminus: Cysteine--tRNA ligase (459 aa).

Cys31 contributes to the Zn(2+) binding site. The short motif at 33 to 43 is the 'HIGH' region element; sequence PTVYDNPHIGN. Zn(2+)-binding residues include Cys216, His241, and Glu245. Positions 274 to 278 match the 'KMSKS' region motif; that stretch reads KMSKS. Position 277 (Lys277) interacts with ATP.

Belongs to the class-I aminoacyl-tRNA synthetase family. In terms of assembly, monomer. Zn(2+) is required as a cofactor.

It localises to the cytoplasm. The enzyme catalyses tRNA(Cys) + L-cysteine + ATP = L-cysteinyl-tRNA(Cys) + AMP + diphosphate. The protein is Cysteine--tRNA ligase of Rickettsia felis (strain ATCC VR-1525 / URRWXCal2) (Rickettsia azadi).